A 529-amino-acid chain; its full sequence is Corneodesmosin (529 aa).

The first 32 residues, 1 to 32, serve as a signal peptide directing secretion; it reads MGSSRAPWMGRVGGHGMMALLLAGLLLPGTLA. 2 disordered regions span residues 38–248 and 383–492; these read FSDP…SVSG and GSTG…SSAG. Low complexity-rich tracts occupy residues 58 to 83, 90 to 100, 111 to 175, 189 to 231, 392 to 408, and 426 to 441; these read GKGDSSGFSSYSGSSSSGSSISSARS, GSSSGSSIAQG, GYSQ…NGSA, PSQP…SGGP, SPSSSRVPSSSSISSSS, and PGTGSFSSSSSSQSSG. Residue Asn172 is glycosylated (N-linked (GlcNAc...) asparagine). Residues 449-467 are compositionally biased toward polar residues; the sequence is GSKSSSSGHPCMSVSSLTL.

As to expression, exclusively expressed in skin.

Its subcellular location is the secreted. In terms of biological role, important for the epidermal barrier integrity. The polypeptide is Corneodesmosin (CDSN) (Homo sapiens (Human)).